The primary structure comprises 418 residues: L-rhamnose isomerase (418 aa).

Residues His-262, Asp-294, and Asp-296 each contribute to the Mn(2+) site.

The protein belongs to the rhamnose isomerase family. Requires Mn(2+) as cofactor.

The protein localises to the cytoplasm. It carries out the reaction L-rhamnopyranose = L-rhamnulose. It participates in carbohydrate degradation; L-rhamnose degradation; glycerone phosphate from L-rhamnose: step 1/3. Functionally, catalyzes the interconversion of L-rhamnose and L-rhamnulose. This chain is L-rhamnose isomerase, found in Bacteroides thetaiotaomicron (strain ATCC 29148 / DSM 2079 / JCM 5827 / CCUG 10774 / NCTC 10582 / VPI-5482 / E50).